Here is a 621-residue protein sequence, read N- to C-terminus: DnaJ homolog subfamily C member 2 (621 aa).

Residue Met-1 is modified to N-acetylmethionine. Positions Ser-23–Val-31 are epitope (recognized by CD8(+) cytotoxic T-lymphocytes). 4 positions are modified to phosphoserine: Ser-47, Ser-49, Ser-60, and Ser-63. Residues Asp-88–Asp-161 form the J domain. The interval Val-160–Gln-250 is ZRF1-UBD. Disordered stretches follow at residues Glu-294–Ala-315 and Lys-426–Asn-453. 2 SANT domains span residues Asn-449–Pro-511 and Thr-549–Lys-604.

As to quaternary structure, component of ribosome-associated complex (RAC), a heterodimer composed of Hsp70/DnaK-type chaperone HSPA14 and Hsp40/DnaJ-type chaperone DNAJC2. Interacts (via ZRF1-UBD region) with ID1. In terms of processing, phosphorylated in M (mitotic) phase. In terms of tissue distribution, widely expressed.

Its subcellular location is the nucleus. The protein resides in the cytoplasm. It is found in the cytosol. Its function is as follows. Acts both as a chaperone in the cytosol and as a chromatin regulator in the nucleus. When cytosolic, acts as a molecular chaperone: component of the ribosome-associated complex (RAC), a complex involved in folding or maintaining nascent polypeptides in a folding-competent state. In the RAC complex, stimulates the ATPase activity of the ribosome-associated pool of Hsp70-type chaperones HSPA14 that bind to the nascent polypeptide chain. When nuclear, mediates the switching from polycomb-repressed genes to an active state: specifically recruited at histone H2A ubiquitinated at 'Lys-119' (H2AK119ub), and promotes the displacement of the polycomb PRC1 complex from chromatin, thereby facilitating transcription activation. The polypeptide is DnaJ homolog subfamily C member 2 (DNAJC2) (Homo sapiens (Human)).